We begin with the raw amino-acid sequence, 56 residues long: Large ribosomal subunit protein bL33c (56 aa).

The protein belongs to the bacterial ribosomal protein bL33 family.

The protein resides in the plastid. It is found in the chloroplast. The sequence is that of Large ribosomal subunit protein bL33c (rpl33) from Guillardia theta (Cryptophyte).